Consider the following 689-residue polypeptide: Glycine--tRNA ligase beta subunit (689 aa).

Belongs to the class-II aminoacyl-tRNA synthetase family. Tetramer of two alpha and two beta subunits.

The protein resides in the cytoplasm. The catalysed reaction is tRNA(Gly) + glycine + ATP = glycyl-tRNA(Gly) + AMP + diphosphate. In Erwinia tasmaniensis (strain DSM 17950 / CFBP 7177 / CIP 109463 / NCPPB 4357 / Et1/99), this protein is Glycine--tRNA ligase beta subunit.